Consider the following 161-residue polypeptide: Arachidonate 5-lipoxygenase-activating protein (161 aa).

The Lumenal portion of the chain corresponds to 1 to 8 (MDQEAVGN). A helical membrane pass occupies residues 9 to 30 (VVLLALVTLISVVQNAFFAHKV). Residues 31–52 (EHESKAHNGRSFQRTGTLAFER) lie on the Cytoplasmic side of the membrane. The helical transmembrane segment at 53 to 77 (VYTANQNCVDAYPTFLVVLWTAGLL) threads the bilayer. Residues 78–80 (CSQ) are Lumenal-facing. Residues 81–102 (VPAAFAGLMYLFVRQKYFVGYL) traverse the membrane as a helical segment. Residues 103 to 107 (GERTQ) are Cytoplasmic-facing. Residues 108 to 115 (STPGYIFG) lie within the membrane without spanning it. Residues 116 to 128 (KRIILFLFLMSFA) form a helical membrane-spanning segment. Over 129–161 (GILNHYLIFFFGSDFENYIRTVSTTISPLLLIP) the chain is Lumenal.

It belongs to the MAPEG family. As to quaternary structure, homotrimer. Interacts with LTC4S and ALOX5.

Its subcellular location is the nucleus membrane. The protein resides in the endoplasmic reticulum membrane. In terms of biological role, required for leukotriene biosynthesis by ALOX5 (5-lipoxygenase). Anchors ALOX5 to the membrane. Binds arachidonic acid, and could play an essential role in the transfer of arachidonic acid to ALOX5. Binds to MK-886, a compound that blocks the biosynthesis of leukotrienes. In Mus musculus (Mouse), this protein is Arachidonate 5-lipoxygenase-activating protein (Alox5ap).